We begin with the raw amino-acid sequence, 130 residues long: Small ribosomal subunit protein uS11c (130 aa).

This sequence belongs to the universal ribosomal protein uS11 family. In terms of assembly, part of the 30S ribosomal subunit.

Its subcellular location is the plastid. The protein localises to the chloroplast. The protein is Small ribosomal subunit protein uS11c of Stigeoclonium helveticum (Green alga).